The primary structure comprises 329 residues: DNA-directed RNA polymerase subunit alpha (329 aa).

The tract at residues 1–234 (MQGSVTEFLR…EQLDAFVELR (234 aa)) is alpha N-terminal domain (alpha-NTD). Positions 248 to 329 (FDPILLRPVD…WPPASLVDDL (82 aa)) are alpha C-terminal domain (alpha-CTD).

This sequence belongs to the RNA polymerase alpha chain family. As to quaternary structure, homodimer. The RNAP catalytic core consists of 2 alpha, 1 beta, 1 beta' and 1 omega subunit. When a sigma factor is associated with the core the holoenzyme is formed, which can initiate transcription.

The enzyme catalyses RNA(n) + a ribonucleoside 5'-triphosphate = RNA(n+1) + diphosphate. Its function is as follows. DNA-dependent RNA polymerase catalyzes the transcription of DNA into RNA using the four ribonucleoside triphosphates as substrates. This chain is DNA-directed RNA polymerase subunit alpha, found in Shewanella violacea (strain JCM 10179 / CIP 106290 / LMG 19151 / DSS12).